Reading from the N-terminus, the 493-residue chain is MSIYQSIQDFISLALQNGTIEPLDELYHRNQLLHFLGLNDWAEVDKEVHETNSLILMDQLLAIANENNVIAKGQDEFYEAALMNFMTPRPSKINHDFWEKYQASPDDATQYFYELAQQVNQVKTRDIARNIAFSHLTKYGKLEITINLSKPEKDPKAIAAAKLVKASSYPACQLCLENEGFYGLGNKPARSNHRIIQVSINGEDWGFQYSPYAYFNEHSILLNAKHQPMEINKRAFDNLLGFLDKFPNYMIGSNADLPIVGGSILTHDHYQAGRHDFPMAKAELRETIELAHFPEVSCGIVNWPMSVLRLASENQVELSKAADDFLKKWQVYSDESLQIKAKSTDGTPHHTITPIARIRDGKYELDLVLRDNNTNEKYPDGIFHPHPALHHIKKENIGLIEVMGLAILPARLGTELLEVEKYLLNQDNQMDEIHKAWAEQLKNEEHFTRETVHATVQGAVGEVFEEVLKDAGVFKDTQEGHEGFRKFIDFVNQ.

The protein belongs to the galactose-1-phosphate uridylyltransferase type 2 family.

The protein localises to the cytoplasm. It catalyses the reaction alpha-D-galactose 1-phosphate + UDP-alpha-D-glucose = alpha-D-glucose 1-phosphate + UDP-alpha-D-galactose. It functions in the pathway carbohydrate metabolism; galactose metabolism. This is Galactose-1-phosphate uridylyltransferase from Lactococcus lactis subsp. cremoris (strain MG1363).